Reading from the N-terminus, the 413-residue chain is 3-isopropylmalate dehydratase large subunit (413 aa).

[4Fe-4S] cluster is bound by residues cysteine 293, cysteine 353, and cysteine 356.

The protein belongs to the aconitase/IPM isomerase family. LeuC type 2 subfamily. As to quaternary structure, heterodimer of LeuC and LeuD. It depends on [4Fe-4S] cluster as a cofactor.

It carries out the reaction (2R,3S)-3-isopropylmalate = (2S)-2-isopropylmalate. Its pathway is amino-acid biosynthesis; L-leucine biosynthesis; L-leucine from 3-methyl-2-oxobutanoate: step 2/4. In terms of biological role, catalyzes the isomerization between 2-isopropylmalate and 3-isopropylmalate, via the formation of 2-isopropylmaleate. The sequence is that of 3-isopropylmalate dehydratase large subunit from Picrophilus torridus (strain ATCC 700027 / DSM 9790 / JCM 10055 / NBRC 100828 / KAW 2/3).